A 141-amino-acid chain; its full sequence is uncharacterized protein (141 aa).

This is an uncharacterized protein from Listeria innocua serovar 6a (strain ATCC BAA-680 / CLIP 11262).